Here is a 132-residue protein sequence, read N- to C-terminus: Cell division protein FtsL (132 aa).

Topologically, residues 1-50 (MAELKKMRHNHYDVPVMDEPVIASQIKKTNQKKESFQLPQKKLNKISVFE) are cytoplasmic. Residues 51-71 (KILCILLLCSIVGIVVITIQI) traverse the membrane as a helical segment. Residues 72 to 132 (RTTISETMNN…EIDGNLRKVK (61 aa)) are Extracellular-facing.

Belongs to the FtsL family.

The protein resides in the cell membrane. Functionally, essential cell division protein. The polypeptide is Cell division protein FtsL (Melissococcus plutonius (strain ATCC 35311 / DSM 29964 / CIP 104052 / LMG 20360 / NCIMB 702443)).